The primary structure comprises 330 residues: Aspartate--ammonia ligase (330 aa).

The protein belongs to the class-II aminoacyl-tRNA synthetase family. AsnA subfamily.

It is found in the cytoplasm. It catalyses the reaction L-aspartate + NH4(+) + ATP = L-asparagine + AMP + diphosphate + H(+). It functions in the pathway amino-acid biosynthesis; L-asparagine biosynthesis; L-asparagine from L-aspartate (ammonia route): step 1/1. This Escherichia coli O81 (strain ED1a) protein is Aspartate--ammonia ligase.